A 205-amino-acid polypeptide reads, in one-letter code: Anaerobic dimethyl sulfoxide reductase chain B (205 aa).

4Fe-4S ferredoxin-type domains lie at 5 to 33 (YGFF…LTPE), 59 to 89 (FAYY…KRED), and 90 to 119 (GFVV…YNET). [4Fe-4S] cluster-binding residues include Cys14, Cys17, Cys20, Cys24, Cys67, Cys70, Cys75, Cys79, Cys99, Cys102, Cys105, Cys109, Cys126, Cys129, Cys141, and Cys145. The tract at residues 184 to 205 (KPNANSRPTGDTTGYLANPKEV) is disordered. The span at 186-195 (NANSRPTGDT) shows a compositional bias: polar residues.

Heterotrimeric enzyme composed of a catalytic heterodimer (DmsAB) and a membrane anchor protein (DmsC). [4Fe-4S] cluster is required as a cofactor.

Electron transfer subunit of the terminal reductase during anaerobic growth on various sulfoxide and N-oxide compounds. In Shigella flexneri, this protein is Anaerobic dimethyl sulfoxide reductase chain B (dmsB).